Here is an 872-residue protein sequence, read N- to C-terminus: Alanine--tRNA ligase (872 aa).

Zn(2+) contacts are provided by histidine 567, histidine 571, cysteine 669, and histidine 673.

It belongs to the class-II aminoacyl-tRNA synthetase family. Requires Zn(2+) as cofactor.

Its subcellular location is the cytoplasm. It carries out the reaction tRNA(Ala) + L-alanine + ATP = L-alanyl-tRNA(Ala) + AMP + diphosphate. Functionally, catalyzes the attachment of alanine to tRNA(Ala) in a two-step reaction: alanine is first activated by ATP to form Ala-AMP and then transferred to the acceptor end of tRNA(Ala). Also edits incorrectly charged Ser-tRNA(Ala) and Gly-tRNA(Ala) via its editing domain. This chain is Alanine--tRNA ligase, found in Streptococcus suis (strain 98HAH33).